Consider the following 98-residue polypeptide: Cell division topological specificity factor (98 aa).

It belongs to the MinE family.

Prevents the cell division inhibition by proteins MinC and MinD at internal division sites while permitting inhibition at polar sites. This ensures cell division at the proper site by restricting the formation of a division septum at the midpoint of the long axis of the cell. The sequence is that of Cell division topological specificity factor from Nitrosomonas europaea (strain ATCC 19718 / CIP 103999 / KCTC 2705 / NBRC 14298).